Consider the following 661-residue polypeptide: UvrABC system protein B (661 aa).

In terms of domain architecture, Helicase ATP-binding spans 26-181 (KGIQEGRKHQ…LLRKLVDIQY (156 aa)). 39-46 (GATGTGKT) provides a ligand contact to ATP. Residues 92–115 (YYDYYQPEAYVPQTDTFIEKDASI) carry the Beta-hairpin motif. Residues 430–596 (QIDDLIGEIQ…TINKEIRDVI (167 aa)) form the Helicase C-terminal domain. The 36-residue stretch at 625-660 (QKVVEQMEHEMKEAARALDFERAAELRDLLLELKAE) folds into the UVR domain.

This sequence belongs to the UvrB family. As to quaternary structure, forms a heterotetramer with UvrA during the search for lesions. Interacts with UvrC in an incision complex.

It is found in the cytoplasm. In terms of biological role, the UvrABC repair system catalyzes the recognition and processing of DNA lesions. A damage recognition complex composed of 2 UvrA and 2 UvrB subunits scans DNA for abnormalities. Upon binding of the UvrA(2)B(2) complex to a putative damaged site, the DNA wraps around one UvrB monomer. DNA wrap is dependent on ATP binding by UvrB and probably causes local melting of the DNA helix, facilitating insertion of UvrB beta-hairpin between the DNA strands. Then UvrB probes one DNA strand for the presence of a lesion. If a lesion is found the UvrA subunits dissociate and the UvrB-DNA preincision complex is formed. This complex is subsequently bound by UvrC and the second UvrB is released. If no lesion is found, the DNA wraps around the other UvrB subunit that will check the other stand for damage. In Bacillus velezensis (strain DSM 23117 / BGSC 10A6 / LMG 26770 / FZB42) (Bacillus amyloliquefaciens subsp. plantarum), this protein is UvrABC system protein B.